Reading from the N-terminus, the 683-residue chain is MADKKNLLLLFDHPTEPVFMDKGGNGTVFDVPASYVTDRYNKMCKKVQRRVSGGFEKNVLVKEIPIPDLSCSMRLGRSEQFSLFLESHRQMACHLIDVFIKMPTVDELQSVAVYARDRVNPVLFNYALSVAMLHRSDTKDLGLPAFAQIFPDRFIDSQMLRTMREESFVVERSAARLPVHSSVKYTASDLDVEHRLWYFREDLGVNLHHWHWHLVYPNTAPDRSIVDKDRRGELFYYMHQQIIARYNAERLCNHMARVQPFNNLEEPIAEGYFPKMDSLVASRAFPPRFDNTRLSDVDRPINQLRVGIDDMKRWRERIYEAIHQGYVLDANHKKIVLDDVKGIDILGNIIESSQLTPNKTLYGDLHNKGHILIAFSHDPTNKHLEYAGVMGDASTAMRDPIFYKWHAFIDNLFQEHKRQLSPYTEEDLTFPDVRVQSIQVESQGQVNRLTTFWQESDVDMSRGLDFVPRGHVLARFTHLQHHPFSYTIEVENSSEATRYGYVRIFLAPKLDDGNATMLLEQQRRMMVELDKFVVTMPPGSHTITRDSTESSVTIPFKRTFRNMDNPGEPQNFLCGCGWPQHMLIPKGRAEGLSFELFVMVSNYEDDKVDQKPEDCECSIAASYCGLRDRLYPDRKSMGFPFDRQPRSGSELLEKFLTPNMCSIEVIISHEARTEKIPELPDHS.

A propeptide spanning residues Met-1–Gln-48 is cleaved from the precursor. The N-linked (GlcNAc...) asparagine glycan is linked to Asn-25. Cu cation-binding residues include His-209, His-213, and His-239. The active-site Proton acceptor is the Glu-351. Residue Asn-358 is glycosylated (N-linked (GlcNAc...) asparagine). The Cu cation site is built by His-366, His-370, and His-406. Asn-492 and Asn-514 each carry an N-linked (GlcNAc...) asparagine glycan. 2 disulfides stabilise this stretch: Cys-574–Cys-617 and Cys-576–Cys-624.

The protein belongs to the tyrosinase family. Cu(2+) is required as a cofactor. Upon activation, a trypsin type protease cleaves prophenol oxidase to yield the active enzyme.

The protein resides in the secreted. It carries out the reaction 2 L-dopa + O2 = 2 L-dopaquinone + 2 H2O. It catalyses the reaction L-tyrosine + O2 = L-dopaquinone + H2O. Functionally, this is a copper-containing oxidase that functions in the formation of pigments such as melanins and other polyphenolic compounds. Catalyzes the rate-limiting conversions of tyrosine to DOPA, DOPA to DOPA-quinone and possibly 5,6 dihydroxyindole to indole-5'6 quinone. This is Phenoloxidase 3 (PPO3) from Drosophila erecta (Fruit fly).